A 501-amino-acid chain; its full sequence is Glycerol kinase (501 aa).

Position 14 (Thr-14) interacts with ADP. The ATP site is built by Thr-14, Thr-15, and Ser-16. Thr-14 is a binding site for sn-glycerol 3-phosphate. Arg-18 provides a ligand contact to ADP. Sn-glycerol 3-phosphate-binding residues include Arg-84, Glu-85, and Tyr-136. Residues Arg-84, Glu-85, and Tyr-136 each coordinate glycerol. Phosphohistidine; by HPr is present on His-231. Asp-245 serves as a coordination point for sn-glycerol 3-phosphate. Residues Asp-245 and Gln-246 each contribute to the glycerol site. Residues Thr-267 and Gly-310 each coordinate ADP. The ATP site is built by Thr-267, Gly-310, Gln-314, and Gly-411. 2 residues coordinate ADP: Gly-411 and Asn-415.

It belongs to the FGGY kinase family. In terms of assembly, homotetramer and homodimer (in equilibrium). Post-translationally, the phosphoenolpyruvate-dependent sugar phosphotransferase system (PTS), including enzyme I, and histidine-containing protein (HPr) are required for the phosphorylation of His-231, which leads to the activation of the enzyme.

The catalysed reaction is glycerol + ATP = sn-glycerol 3-phosphate + ADP + H(+). It participates in polyol metabolism; glycerol degradation via glycerol kinase pathway; sn-glycerol 3-phosphate from glycerol: step 1/1. With respect to regulation, activated by phosphorylation and inhibited by fructose 1,6-bisphosphate (FBP). Key enzyme in the regulation of glycerol uptake and metabolism. Catalyzes the phosphorylation of glycerol to yield sn-glycerol 3-phosphate. In Enterococcus faecalis (strain ATCC 700802 / V583), this protein is Glycerol kinase.